The primary structure comprises 548 residues: T-complex protein 1 subunit theta (548 aa).

The interval glutamine 527–alanine 548 is disordered.

The protein belongs to the TCP-1 chaperonin family. As to quaternary structure, heterooligomeric complex.

Its subcellular location is the cytoplasm. Functionally, molecular chaperone; assists the folding of proteins upon ATP hydrolysis. Known to play a role, in vitro, in the folding of actin and tubulin. Required for correct subcellular localization of pgl-1. In Caenorhabditis elegans, this protein is T-complex protein 1 subunit theta (cct-8).